Reading from the N-terminus, the 128-residue chain is Small ribosomal subunit protein uS8c (128 aa).

It belongs to the universal ribosomal protein uS8 family. As to quaternary structure, part of the 30S ribosomal subunit.

It is found in the plastid. It localises to the chloroplast. Functionally, one of the primary rRNA binding proteins, it binds directly to 16S rRNA central domain where it helps coordinate assembly of the platform of the 30S subunit. In Gnetum parvifolium (Small-leaved jointfir), this protein is Small ribosomal subunit protein uS8c (rps8).